The primary structure comprises 102 residues: Small ribosomal subunit protein bS20 (102 aa).

Belongs to the bacterial ribosomal protein bS20 family.

In terms of biological role, binds directly to 16S ribosomal RNA. The sequence is that of Small ribosomal subunit protein bS20 from Synechococcus sp. (strain WH7803).